Here is a 345-residue protein sequence, read N- to C-terminus: MDVLSAVLLALLLIGANAFFVGAEFALISARRDRLEALAEQGKATAVTVIRAGEQLPAMLTGAQLGVTVSSILLGRVGEPAVVKLLQLSFGLSGVPPALLHTLSLAIVVALHVLLGEMVPKNIALAGPERTAMLLVPPYLVYVRLARPFIAVYNNCANAILRLVGVQPKDELDIAVSTAELSEMIAESLSEGLLDHEEHTRLTRALRIRTRLVADVAVPLVNIRAVQVSAVGSGPTIGGVEQALAQTGYSRFPVVDRGGRFIGYLHIKDVLTLGDNPQTVIDLAVVRPLPRVPQSLPLADALSRMRRINSHLALVTADNGSVVGMVALEDVVEDLVGTMRDGTHR.

In terms of domain architecture, CNNM transmembrane spans 1 to 198; it reads MDVLSAVLLA…LSEGLLDHEE (198 aa). The next 2 membrane-spanning stretches (helical) occupy residues 3–23 and 95–115; these read VLSAVLLALLLIGANAFFVGA and VPPALLHTLSLAIVVALHVLL. 2 CBS domains span residues 217 to 280 and 285 to 342; these read AVPL…PQTV and VVRP…MRDG. The helical transmembrane segment at 312-332 threads the bilayer; sequence LALVTADNGSVVGMVALEDVV.

The protein belongs to the TerC family.

The protein resides in the cell membrane. This is an uncharacterized protein from Mycobacterium tuberculosis (strain CDC 1551 / Oshkosh).